We begin with the raw amino-acid sequence, 1453 residues long: Clustered mitochondria protein homolog (1453 aa).

The span at 78-101 (LSENGQENSPHNSDSGHETSSPDS) shows a compositional bias: polar residues. The disordered stretch occupies residues 78 to 110 (LSENGQENSPHNSDSGHETSSPDSPLTPIEEGA). One can recognise a Clu domain in the interval 439 to 690 (EDGIRAEDCT…RTFPPDVNYL (252 aa)). The disordered stretch occupies residues 979–1015 (PLTPSNEEVSMPINSVKKSRSSKRRKQISSGGKENDD). Over residues 995–1005 (KKSRSSKRRKQ) the composition is skewed to basic residues. 2 TPR repeats span residues 1235 to 1268 (AEIDGNIGVILYAVQEFDDALKFLQNALKLHQIY) and 1277 to 1310 (ALIYHLLARTYSCRGDFRTALQMEKETFTIYSKT).

It belongs to the CLU family.

It localises to the cytoplasm. In terms of biological role, mRNA-binding protein involved in proper cytoplasmic distribution of mitochondria. This is Clustered mitochondria protein homolog from Brugia malayi (Filarial nematode worm).